Consider the following 276-residue polypeptide: N-alpha-acetyltransferase 60 (276 aa).

The region spanning 34-239 (VQLRFLVPDD…WTLLDHIKHY (206 aa)) is the N-acetyltransferase domain. Tyr59 provides a ligand contact to substrate. Residue Tyr139 is part of the active site. Leu141 is a binding site for substrate. Residues 143 to 145 (LGV) and 151 to 156 (RNGIGS) each bind acetyl-CoA. Residue His180 is part of the active site. Residues Asn185 and 192-195 (YEKR) each bind acetyl-CoA. Positions 204 to 215 (PYYYNIRGKGKD) are required for homodimerization. Tyr207 provides a ligand contact to substrate.

This sequence belongs to the acetyltransferase family. NAA60 subfamily.

It catalyses the reaction N-terminal L-methionyl-[transmembrane protein] + acetyl-CoA = N-terminal N(alpha)-acetyl-L-methionyl-[transmembrane protein] + CoA + H(+). The catalysed reaction is L-lysyl-[protein] + acetyl-CoA = N(6)-acetyl-L-lysyl-[protein] + CoA + H(+). In terms of biological role, displays alpha (N-terminal) acetyltransferase activity towards a range of N-terminal sequences including those starting with Met-Lys, Met-Val, Met-Ala and Met-Met. Required for normal chromosomal segregation during anaphase. Functionally, shows histone acetyltransferase activity toward free histones. Does not show histone acetyltransferase activity toward free histones. The protein is N-alpha-acetyltransferase 60 of Drosophila melanogaster (Fruit fly).